The sequence spans 346 residues: Selenide, water dikinase (346 aa).

Residue Sec17 is part of the active site. A non-standard amino acid (selenocysteine) is located at residue Sec17. Residues Lys20 and Thr47–Asp49 each bind ATP. Asp50 is a binding site for Mg(2+). ATP is bound by residues Asp67, Asp90, and Gly138 to Thr140. Mg(2+) is bound at residue Asp90. Asp226 contributes to the Mg(2+) binding site.

It belongs to the selenophosphate synthase 1 family. Class I subfamily. Homodimer. The cofactor is Mg(2+).

It carries out the reaction hydrogenselenide + ATP + H2O = selenophosphate + AMP + phosphate + 2 H(+). Its function is as follows. Synthesizes selenophosphate from selenide and ATP. The chain is Selenide, water dikinase from Trichlorobacter lovleyi (strain ATCC BAA-1151 / DSM 17278 / SZ) (Geobacter lovleyi).